The sequence spans 211 residues: Thymidylate kinase (211 aa).

10-17 (GPDGAGKT) serves as a coordination point for ATP.

It belongs to the thymidylate kinase family.

It catalyses the reaction dTMP + ATP = dTDP + ADP. Its function is as follows. Phosphorylation of dTMP to form dTDP in both de novo and salvage pathways of dTTP synthesis. The chain is Thymidylate kinase from Lactococcus lactis subsp. cremoris (strain MG1363).